The primary structure comprises 214 residues: uncharacterized protein (214 aa).

An N-terminal signal peptide occupies residues 1–15 (MRPLILSIFALFLAG). Cys-16 carries N-palmitoyl cysteine lipidation. Cys-16 is lipidated: S-diacylglycerol cysteine.

The protein to E.coli YjbF.

The protein resides in the cell membrane. This is an uncharacterized protein from Escherichia coli (strain K12).